An 81-amino-acid chain; its full sequence is Large ribosomal subunit protein bL31B (81 aa).

Belongs to the bacterial ribosomal protein bL31 family. Type B subfamily. Part of the 50S ribosomal subunit.

This chain is Large ribosomal subunit protein bL31B, found in Lactococcus lactis subsp. lactis (strain IL1403) (Streptococcus lactis).